The chain runs to 444 residues: Glutamate--methylamine ligase (444 aa).

The GS beta-grasp domain occupies 14–97; that stretch reads HHVKYVLAQF…LVCDGHVNGK (84 aa). The GS catalytic domain occupies 103–444; it reads TRVVLKQQIA…WEINRYVQFY (342 aa).

Belongs to the glutamine synthetase family. Type 3 subfamily. Mg(2+) is required as a cofactor.

It catalyses the reaction methylamine + L-glutamate + ATP = N(5)-methyl-L-glutamine + ADP + phosphate + H(+). The catalysed reaction is ethylamine + L-glutamate + ATP = N(5)-ethyl-L-glutamine + ADP + phosphate + H(+). With respect to regulation, formation of theanine is repressed by a high concentration of glutamic acid. Its function is as follows. Catalyzes the formation of N(5)-methyl-L-glutamine from glutamate and methylamine. In vitro, can also use ethylamine, hydroxylamine and ammonia, with 75%, 40% and 1% activity compared to methylamine, respectively. This Methylovorus mays protein is Glutamate--methylamine ligase.